A 1399-amino-acid polypeptide reads, in one-letter code: DNA-directed RNA polymerase subunit beta' (1399 aa).

Residues C70, C72, C85, and C88 each coordinate Zn(2+). Mg(2+) is bound by residues D460, D462, and D464. Zn(2+) contacts are provided by C814, C888, C895, and C898.

This sequence belongs to the RNA polymerase beta' chain family. As to quaternary structure, the RNAP catalytic core consists of 2 alpha, 1 beta, 1 beta' and 1 omega subunit. When a sigma factor is associated with the core the holoenzyme is formed, which can initiate transcription. It depends on Mg(2+) as a cofactor. Requires Zn(2+) as cofactor.

The enzyme catalyses RNA(n) + a ribonucleoside 5'-triphosphate = RNA(n+1) + diphosphate. DNA-dependent RNA polymerase catalyzes the transcription of DNA into RNA using the four ribonucleoside triphosphates as substrates. The polypeptide is DNA-directed RNA polymerase subunit beta' (Pseudomonas fluorescens (strain SBW25)).